Consider the following 298-residue polypeptide: MTRHGKNCTAGAVYTYYEKKKDTVASGYGTQTVRLSKDAVKDFDCCCLSLQPCKDPVVTSDGYIYEKESILEYILHQKKEIARQMKAYEKQKNSKKAEMEELNKAAKESKMKAFLDKEMTIVSKPLNPFTRKSDSGIDAAEPSCSQQSSEEKNKQLPSFWIPSLTPEAKTSLVKKPDKTVYCPMSGRPLKMKDLMPVNFTRVDEKVDRVGLINRQDRYVCAVTRDMLGNSVPCAVLRPSGAVVTMECVEKLIKKDMIDPISGDKLSERDIIMLQRGGTGFSGSGVLLQAKEARPVMQA.

The Nuclear localization signal signature appears at 78–101; the sequence is KKEIARQMKAYEKQKNSKKAEMEE. A disordered region spans residues 132 to 156; sequence KSDSGIDAAEPSCSQQSSEEKNKQL.

It belongs to the NOSIP family.

The protein localises to the cytoplasm. The protein resides in the nucleus. The enzyme catalyses S-ubiquitinyl-[E2 ubiquitin-conjugating enzyme]-L-cysteine + [acceptor protein]-L-lysine = [E2 ubiquitin-conjugating enzyme]-L-cysteine + N(6)-ubiquitinyl-[acceptor protein]-L-lysine.. Its function is as follows. E3 ubiquitin-protein ligase that is essential for proper development of the forebrain, the eye, and the face. Negatively regulates nitric oxide production by inducing nitric oxide synthase translocation to actin cytoskeleton and inhibiting its enzymatic activity. The polypeptide is Nitric oxide synthase-interacting protein (nosip) (Xenopus laevis (African clawed frog)).